A 251-amino-acid polypeptide reads, in one-letter code: Triosephosphate isomerase (251 aa).

Position 9 to 11 (9 to 11) interacts with substrate; sequence NWK. The Electrophile role is filled by H94. The Proton acceptor role is filled by E166. Substrate-binding positions include G172, S211, and 232-233; that span reads GG.

Belongs to the triosephosphate isomerase family. As to quaternary structure, homodimer.

It localises to the cytoplasm. It carries out the reaction D-glyceraldehyde 3-phosphate = dihydroxyacetone phosphate. It functions in the pathway carbohydrate biosynthesis; gluconeogenesis. Its pathway is carbohydrate degradation; glycolysis; D-glyceraldehyde 3-phosphate from glycerone phosphate: step 1/1. Its function is as follows. Involved in the gluconeogenesis. Catalyzes stereospecifically the conversion of dihydroxyacetone phosphate (DHAP) to D-glyceraldehyde-3-phosphate (G3P). This Stenotrophomonas maltophilia (strain K279a) protein is Triosephosphate isomerase.